Reading from the N-terminus, the 53-residue chain is uncharacterized protein (53 aa).

A helical membrane pass occupies residues 20–42 (ILFPVLLVFDTILIVVGIALILF).

It localises to the membrane. This is an uncharacterized protein from Archaeoglobus fulgidus (strain ATCC 49558 / DSM 4304 / JCM 9628 / NBRC 100126 / VC-16).